A 383-amino-acid chain; its full sequence is L-Ala-D/L-Glu epimerase (383 aa).

Residues Arg68, Tyr94, and 198–200 each bind substrate; that span reads KVK. Mg(2+) contacts are provided by Asp224, Glu251, and Asp276. Substrate is bound by residues Lys298, 326-328, and 348-350; these read CMT and DLD.

It belongs to the mandelate racemase/muconate lactonizing enzyme family. The cofactor is Mg(2+).

It carries out the reaction L-alanyl-L-glutamate = L-alanyl-D-glutamate. Catalyzes the epimerization of L-Ala-D-Glu to L-Ala-L-Glu and may play a role in the metabolism of the murein peptide, of which L-Ala-D-Glu is a component. Is also able to catalyze the epimerization of L-Ala-D-Asp, L-Ala-L-Glu, L-Ala-L-Ser, L-Ala-L-Pro, L-Ala-L-L-Val, L-Ala-L-Thr, L-Ala-L-Leu, L-Ala-L-Ile and L-Gly-L-Glu (in vitro). The protein is L-Ala-D/L-Glu epimerase of Bacteroides thetaiotaomicron (strain ATCC 29148 / DSM 2079 / JCM 5827 / CCUG 10774 / NCTC 10582 / VPI-5482 / E50).